The sequence spans 375 residues: Succinyl-diaminopimelate desuccinylase (375 aa).

Histidine 66 contacts Zn(2+). Aspartate 68 is a catalytic residue. Aspartate 99 contacts Zn(2+). Glutamate 133 functions as the Proton acceptor in the catalytic mechanism. Zn(2+) contacts are provided by glutamate 134, glutamate 162, and histidine 348.

This sequence belongs to the peptidase M20A family. DapE subfamily. As to quaternary structure, homodimer. The cofactor is Zn(2+). Co(2+) serves as cofactor.

It catalyses the reaction N-succinyl-(2S,6S)-2,6-diaminopimelate + H2O = (2S,6S)-2,6-diaminopimelate + succinate. It participates in amino-acid biosynthesis; L-lysine biosynthesis via DAP pathway; LL-2,6-diaminopimelate from (S)-tetrahydrodipicolinate (succinylase route): step 3/3. In terms of biological role, catalyzes the hydrolysis of N-succinyl-L,L-diaminopimelic acid (SDAP), forming succinate and LL-2,6-diaminopimelate (DAP), an intermediate involved in the bacterial biosynthesis of lysine and meso-diaminopimelic acid, an essential component of bacterial cell walls. This is Succinyl-diaminopimelate desuccinylase from Shigella dysenteriae serotype 1 (strain Sd197).